The following is a 203-amino-acid chain: uncharacterized protein (203 aa).

3 residues coordinate Fe cation: His34, Glu97, and His172.

This sequence belongs to the hemerythrin family.

Its subcellular location is the mitochondrion. This is an uncharacterized protein from Schizosaccharomyces pombe (strain 972 / ATCC 24843) (Fission yeast).